Reading from the N-terminus, the 766-residue chain is Pentatricopeptide repeat-containing protein At5g28460 (766 aa).

PPR repeat units lie at residues T151–N181, N184–F218, N221–P257, N258–L292, E293–P327, D328–K358, D369–P404, N405–P439, N440–G474, N475–P509, D510–L544, D545–P579, D580–P614, T615–P650, N651–P685, and N686–P720.

The protein belongs to the PPR family. P subfamily.

The sequence is that of Pentatricopeptide repeat-containing protein At5g28460 from Arabidopsis thaliana (Mouse-ear cress).